A 395-amino-acid polypeptide reads, in one-letter code: ATP phosphoribosyltransferase regulatory subunit (395 aa).

This sequence belongs to the class-II aminoacyl-tRNA synthetase family. HisZ subfamily. Heteromultimer composed of HisG and HisZ subunits.

It localises to the cytoplasm. It participates in amino-acid biosynthesis; L-histidine biosynthesis; L-histidine from 5-phospho-alpha-D-ribose 1-diphosphate: step 1/9. Functionally, required for the first step of histidine biosynthesis. May allow the feedback regulation of ATP phosphoribosyltransferase activity by histidine. The chain is ATP phosphoribosyltransferase regulatory subunit from Thioalkalivibrio sulfidiphilus (strain HL-EbGR7).